The sequence spans 439 residues: Glycosyl hydrolase DigH (439 aa).

The signal sequence occupies residues 1–27 (MDICSRNEKLAIRRPAILVALALLLCS). C28 is lipidated: N-palmitoyl cysteine. A lipid anchor (S-diacylglycerol cysteine) is attached at C28. A disordered region spans residues 34–54 (ESMVTPPAGSKPPATTQQSSQ).

It belongs to the glycosyl hydrolase-like 10 (GHL10) family.

The protein localises to the cell outer membrane. In terms of biological role, divisome-localized glycosyl hydrolase that cleaves peptide-free (denuded) peptidoglycans. The polypeptide is Glycosyl hydrolase DigH (Escherichia coli O6:H1 (strain CFT073 / ATCC 700928 / UPEC)).